The chain runs to 573 residues: Putative inorganic phosphate transporter C1683.01 (573 aa).

The next 6 helical transmembrane spans lie at 48-68 (MMLA…INLV), 100-120 (AASN…GDFF), 124-144 (FVYG…IAMP), 154-174 (MMWV…DYPM), 194-214 (LIFA…IILL), and 230-250 (LEGV…GVLI). The segment covering 261–270 (FKNSQQLNSG) has biased composition (polar residues). Disordered stretches follow at residues 261–280 (FKNS…TSLN) and 290–312 (PSVT…RSNT). The next 6 helical transmembrane spans lie at 348-368 (HLLG…GVNL), 397-417 (LIIA…LVEI), 422-442 (WIQL…AGRW), 451-471 (FACF…TTFI), 487-507 (GISA…FNFL), and 510-530 (IIGY…GILF).

Belongs to the major facilitator superfamily. Sugar transporter (TC 2.A.1.1) family.

It localises to the endoplasmic reticulum membrane. High-affinity transporter for external inorganic phosphate. In Schizosaccharomyces pombe (strain 972 / ATCC 24843) (Fission yeast), this protein is Putative inorganic phosphate transporter C1683.01.